Consider the following 210-residue polypeptide: Large ribosomal subunit protein uL4 (210 aa).

Residues 46–77 are disordered; sequence QGTHKSKERGEIAGSTKKIKKQKGTGTARAGS.

The protein belongs to the universal ribosomal protein uL4 family. In terms of assembly, part of the 50S ribosomal subunit.

One of the primary rRNA binding proteins, this protein initially binds near the 5'-end of the 23S rRNA. It is important during the early stages of 50S assembly. It makes multiple contacts with different domains of the 23S rRNA in the assembled 50S subunit and ribosome. Its function is as follows. Forms part of the polypeptide exit tunnel. The sequence is that of Large ribosomal subunit protein uL4 from Amoebophilus asiaticus (strain 5a2).